Here is a 699-residue protein sequence, read N- to C-terminus: Polyribonucleotide nucleotidyltransferase (699 aa).

Mg(2+) is bound by residues aspartate 485 and aspartate 491. The KH domain occupies 552–611 (PRITTIKINPEKIRDVIGKGGAVIRALTEETGTTIELEDDGTVKIASSNGEATKEAIRRI). The 69-residue stretch at 621–689 (GRIYNGKVIR…RQGRVRLSIK (69 aa)) folds into the S1 motif domain.

The protein belongs to the polyribonucleotide nucleotidyltransferase family. As to quaternary structure, component of the RNA degradosome, which is a multiprotein complex involved in RNA processing and mRNA degradation. The cofactor is Mg(2+).

It is found in the cytoplasm. It carries out the reaction RNA(n+1) + phosphate = RNA(n) + a ribonucleoside 5'-diphosphate. Its function is as follows. Involved in mRNA degradation. Catalyzes the phosphorolysis of single-stranded polyribonucleotides processively in the 3'- to 5'-direction. The sequence is that of Polyribonucleotide nucleotidyltransferase from Shewanella sp. (strain MR-4).